A 151-amino-acid chain; its full sequence is Putative transcriptional regulatory protein TK2151 (151 aa).

This sequence belongs to the Tfx family.

Functionally, putative transcriptional regulator. This Thermococcus kodakarensis (strain ATCC BAA-918 / JCM 12380 / KOD1) (Pyrococcus kodakaraensis (strain KOD1)) protein is Putative transcriptional regulatory protein TK2151.